A 343-amino-acid polypeptide reads, in one-letter code: Probable long-chain-alcohol O-fatty-acyltransferase 2 (343 aa).

The next 8 helical transmembrane spans lie at 7–27 (NLIKVWISALISISYCYYISS), 36–56 (LLSLLPIFIIFLLLPLFFSSV), 58–78 (FCVISGFFFTWLANFKLFLFA), 117–137 (PMSKWVLAFKLLIFSFLLHVY), 148–168 (FAFLALFTIHVYLEAELILVF), 235–255 (GMLATFIVSGLMHELIYFYVI), 260–280 (TWEVTCFFLLHGVVTCLEIAM), and 292–312 (AVSGLAITVFLLVTAGWLFYP).

Belongs to the wax synthase family.

Its subcellular location is the membrane. The catalysed reaction is a long chain fatty alcohol + a fatty acyl-CoA = a wax ester + CoA. Catalyzes the final step in the synthesis of long-chain linear esters (waxes). The chain is Probable long-chain-alcohol O-fatty-acyltransferase 2 (AT2) from Arabidopsis thaliana (Mouse-ear cress).